The sequence spans 409 residues: bZIP transcription factor 16 (409 aa).

Positions 1–16 are enriched in basic and acidic residues; it reads MASNEMEKSSKEKEPK. 4 disordered regions span residues 1–63, 118–236, 274–327, and 362–409; these read MASN…VASS, NGMT…LPVS, MHGK…LRKQ, and TTEN…KDST. Residues 24–34 are compositionally biased toward low complexity; the sequence is APPSSQEPSSA. Positions 133-145 are enriched in basic and acidic residues; the sequence is GDAKQSEVKEKLP. A compositionally biased stretch (polar residues) spans 152–178; that stretch reads SLGSLNMITGKNNEPGKNSGASANGAY. Residues 179 to 203 show a composition bias toward low complexity; it reads SKSGESASDGSSEGSDGNSQNDSGS. Positions 216-228 are enriched in polar residues; it reads NGGSANGPQNGSA. The region spanning 305–368 is the bZIP domain; the sequence is ELKRQRRKQS…EELTTENTSL (64 aa). The Bipartite nuclear localization signal motif lies at 307–323; the sequence is KRQRRKQSNRESARRSR. The tract at residues 307-326 is basic motif; the sequence is KRQRRKQSNRESARRSRLRK. The segment covering 314 to 327 has biased composition (basic and acidic residues); that stretch reads SNRESARRSRLRKQ. The interval 333-368 is leucine-zipper; that stretch reads LAQRAEVLNEENTNLRAEINKLKSQCEELTTENTSL. The span at 398-409 shows a compositional bias: basic and acidic residues; that stretch reads AERKVDSYKDST.

The protein belongs to the bZIP family. As to quaternary structure, monomer, homodimer and heterodimers with BZIP68 and GBF1/BZIP41. Heterodimers with GBF2/BZIP54 and GBF3/BZIP55. Binds DNA as monomer and forms homo- and heterodimers. The monomeric form is redox regulated. Interacts with GIP1.

It is found in the nucleus. Transcriptional activator that binds to the G-box motif (5'-CACGTG-3') and other cis-acting elements with 5'-ACGT-3' core, such as Hex, C-box and as-1 motifs. Possesses high binding affinity to G-box, much lower affinity to Hex and C-box, and little affinity to as-1 element. G-box and G-box-like motifs are cis-acting elements defined in promoters of certain plant genes which are regulated by such diverse stimuli as light-induction or hormone control. Binds to the G-box motif 5'-CACGTG-3' of LHCB2.4 (At3g27690) promoter. May act as transcriptional repressor in light-regulated expression of LHCB2.4. Binds DNA as monomer. DNA-binding activity is redox-dependent. This chain is bZIP transcription factor 16, found in Arabidopsis thaliana (Mouse-ear cress).